The following is a 607-amino-acid chain: Dolichyl-diphosphooligosaccharide--protein glycosyltransferase subunit 1 (607 aa).

The first 23 residues, 1 to 23, serve as a signal peptide directing secretion; the sequence is MEAPAARLFLLLLLGTWAPAPGS. The Lumenal segment spans residues 24–434; it reads ASSEAPPLIN…VVHYTFNKVL (411 aa). N6-acetyllysine is present on K187. N-linked (GlcNAc...) asparagine glycosylation is present at N299. The helical transmembrane segment at 435–455 threads the bilayer; that stretch reads MLQEPLLVVAAFYILFFTVII. Residues 456 to 607 are Cytoplasmic-facing; the sequence is YVRLDFSITK…TKIDHILDAL (152 aa). An N6-acetyllysine; alternate modification is found at K538. Residue K538 forms a Glycyl lysine isopeptide (Lys-Gly) (interchain with G-Cter in SUMO2); alternate linkage.

Belongs to the OST1 family. Component of the oligosaccharyltransferase (OST) complex. OST exists in two different complex forms which contain common core subunits RPN1, RPN2, OST48, OST4, DAD1 and TMEM258, either STT3A or STT3B as catalytic subunits, and form-specific accessory subunits. STT3A complex assembly occurs through the formation of 3 subcomplexes. Subcomplex 1 contains RPN1 and TMEM258, subcomplex 2 contains the STT3A-specific subunits STT3A, DC2/OSTC, and KCP2 as well as the core subunit OST4, and subcomplex 3 contains RPN2, DAD1, and OST48. The STT3A complex can form stable complexes with the Sec61 complex or with both the Sec61 and TRAP complexes. Interacts with TMEM35A/NACHO. Post-translationally, ubiquitinated by the ECS(ASB11) complex. In terms of processing, ufmylated by UFL1 in response to endoplasmic reticulum stress, promoting reticulophagy of endoplasmic reticulum sheets.

Its subcellular location is the endoplasmic reticulum membrane. The protein operates within protein modification; protein glycosylation. In terms of biological role, subunit of the oligosaccharyl transferase (OST) complex that catalyzes the initial transfer of a defined glycan (Glc(3)Man(9)GlcNAc(2) in eukaryotes) from the lipid carrier dolichol-pyrophosphate to an asparagine residue within an Asn-X-Ser/Thr consensus motif in nascent polypeptide chains, the first step in protein N-glycosylation. N-glycosylation occurs cotranslationally and the complex associates with the Sec61 complex at the channel-forming translocon complex that mediates protein translocation across the endoplasmic reticulum (ER). All subunits are required for a maximal enzyme activity. The sequence is that of Dolichyl-diphosphooligosaccharide--protein glycosyltransferase subunit 1 from Pongo abelii (Sumatran orangutan).